The primary structure comprises 93 residues: Large ribosomal subunit protein uL23cz/uL23cy (93 aa).

It belongs to the universal ribosomal protein uL23 family. As to quaternary structure, part of the 50S ribosomal subunit.

It is found in the plastid. The protein localises to the chloroplast. In terms of biological role, binds to 23S rRNA. This Coffea arabica (Arabian coffee) protein is Large ribosomal subunit protein uL23cz/uL23cy (rpl23-A).